A 111-amino-acid chain; its full sequence is uncharacterized protein (111 aa).

Residues 1–18 (MGKSMEEGIFVKVFPSKA) form the signal peptide.

This is an uncharacterized protein from Acidianus convivator (ATV).